The sequence spans 206 residues: Protein Nef (206 aa).

G2 carries N-myristoyl glycine; by host lipidation. S6 bears the Phosphoserine; by host mark. The tract at residues 62–65 is acidic; interacts with host PACS1 and PACS2; stabilizes the interaction of NEF/MHC-I with host AP1M1; necessary for MHC-I internalization; sequence EEEE. The SH3-binding; interaction with Src family tyrosine kinases stretch occupies residues 69-78; the sequence is PVTPQVPLRP. The short motif at 72–75 is the PxxP; stabilizes the interaction of NEF/MHC-I with host AP1M1; necessary for MHC-I internalization element; the sequence is PQVP. A mediates dimerization, Nef-PTE1 interaction region spans residues 108-124; the sequence is DILDLWIYHTQGYFPDW. The segment at 108 to 124 is mediates dimerization, Nef-PTE1 interaction, Nef-induced CD4 and MHC-I down-regulation and enhancement of infectivity; that stretch reads DILDLWIYHTQGYFPDW. A binding to ATP6V1H region spans residues 148 to 180; that stretch reads VEPDKVEEANKGENTSLLHPVSLHGMDDPEREV. The Dileucine internalization motif; necessary for CD4 internalization signature appears at 164 to 165; it reads LL. A Diacidic; necessary for CD4 internalization motif is present at residues 174–175; that stretch reads DD.

The protein belongs to the lentivirus primate group Nef protein family. In terms of assembly, monomer; cytosolic form. Homodimer; membrane bound form. Interacts with Nef associated p21-activated kinase (PAK2); this interaction activates PAK2. Associates with the Nef-MHC-I-AP1 complex; this complex is required for MHC-I internalization. Interacts (via C-terminus) with host PI3-kinase. Interacts with host PACS1; this interaction seems to be weak. Interacts with host PACS2. Interacts with host LCK and MAPK3; these interactions inhibit the kinase activity of the latter. Interacts with host ATP6V1H; this interaction may play a role in CD4 endocytosis. Associates with the CD4-Nef-AP2 complex; this complex is required for CD4 internalization. Interacts with host AP2 subunit alpha and AP2 subunit sigma2. Interacts with TCR-zeta chain; this interaction up-regulates the Fas ligand (FasL) surface expression. Interacts with host HCK, LYN, and SRC; these interactions activate the Src family kinases. Interacts with MAP3K5; this interaction inhibits the Fas and TNFR-mediated death signals. Interacts with beta-COP and PTE1. Interacts with human RACK1; this increases Nef phosphorylation by PKC. Interacts with TP53; this interaction decreases the half-life of TP53, protecting the infected cell against p53-mediated apoptosis. The virion-associated Nef proteins are cleaved by the viral protease to release the soluble C-terminal core protein. Nef is probably cleaved concomitantly with viral structural proteins on maturation of virus particles. Post-translationally, myristoylated. In terms of processing, phosphorylated on serine residues, probably by host PKCdelta and theta.

It is found in the host cell membrane. Its subcellular location is the virion. It localises to the secreted. The protein resides in the host Golgi apparatus membrane. Factor of infectivity and pathogenicity, required for optimal virus replication. Alters numerous pathways of T-lymphocytes function and down-regulates immunity surface molecules in order to evade host defense and increase viral infectivity. Alters the functionality of other immunity cells, like dendritic cells, monocytes/macrophages and NK cells. Its function is as follows. In infected CD4(+) T-lymphocytes, down-regulates the surface MHC-I, mature MHC-II, CD4, CD28, CCR5 and CXCR4 molecules. Mediates internalization and degradation of host CD4 through the interaction of with the cytoplasmic tail of CD4, the recruitment of AP-2 (clathrin adapter protein complex 2), internalization through clathrin coated pits, and subsequent transport to endosomes and lysosomes for degradation. Diverts host MHC-I molecules to the trans-Golgi network-associated endosomal compartments by an endocytic pathway to finally target them for degradation. MHC-I down-regulation may involve AP-1 (clathrin adapter protein complex 1) or possibly Src family kinase-ZAP70/Syk-PI3K cascade recruited by PACS2. In consequence infected cells are masked for immune recognition by cytotoxic T-lymphocytes. Decreasing the number of immune receptors also prevents reinfection by more HIV particles (superinfection). Down-regulates host SERINC3 and SERINC5 thereby excluding these proteins from the viral particles. Virion infectivity is drastically higher when SERINC3 or SERINC5 are excluded from the viral envelope, because these host antiviral proteins impair the membrane fusion event necessary for subsequent virion penetration. Functionally, bypasses host T-cell signaling by inducing a transcriptional program nearly identical to that of anti-CD3 cell activation. Interaction with TCR-zeta chain up-regulates the Fas ligand (FasL). Increasing surface FasL molecules and decreasing surface MHC-I molecules on infected CD4(+) cells send attacking cytotoxic CD8+ T-lymphocytes into apoptosis. In terms of biological role, plays a role in optimizing the host cell environment for viral replication without causing cell death by apoptosis. Protects the infected cells from apoptosis in order to keep them alive until the next virus generation is ready to strike. Inhibits the Fas and TNFR-mediated death signals by blocking MAP3K5/ASK1. Decreases the half-life of TP53, protecting the infected cell against p53-mediated apoptosis. Inhibits the apoptotic signals regulated by the Bcl-2 family proteins through the formation of a Nef/PI3-kinase/PAK2 complex that leads to activation of PAK2 and induces phosphorylation of host BAD. Extracellular Nef protein targets CD4(+) T-lymphocytes for apoptosis by interacting with CXCR4 surface receptors. The chain is Protein Nef from Homo sapiens (Human).